We begin with the raw amino-acid sequence, 266 residues long: Oxidoreductase aflX (266 aa).

The protein belongs to the avfA family.

The protein operates within mycotoxin biosynthesis; aflatoxin biosynthesis. Functionally, oxidoreductase; part of the gene cluster that mediates the biosynthesis of aflatoxins, a group of polyketide-derived furanocoumarins, and part of the most toxic and carcinogenic compounds among the known mycotoxins. The four major aflatoxins produced by A.parasiticus are aflatoxin B1 (AFB1), aflatoxin B2 (AFB2), aflatoxin G1 (AFG1) and aflatoxin G2 (AFG2). Within the aflatoxin pathway, the oxidoreductase aflX seems to be involved in the conversion of versicolorin A (VERA) to demethylsterigmatocystin (DMST), through probable epoxide ring-opening step following versicolorin A oxidation required for the formation of the xanthone ring. The biosynthesis of aflatoxins begins with the norsolorinic acid synthase aflC that combines a hexanoyl starter unit produced by the fatty acid synthase aflA/aflB and 7 malonyl-CoA extender units to synthesize the precursor NOR. The second step is the conversion of NOR to averantin and requires the norsolorinic acid ketoreductase aflD, which catalyzes the dehydration of norsolorinic acid to form (1'S)-averantin. The norsolorinic acid reductases aflE and aflF may also play a role in the conversion of NOR to AVN. The cytochrome P450 monooxygenase aflG then catalyzes the hydroxylation of AVN to 5'hydroxyaverantin (HAVN). The next step is performed by the 5'-hydroxyaverantin dehydrogenase aflH that transforms HAVN to 5'-oxoaverantin (OAVN) which is further converted to averufin (AVF) by aflK that plays a dual role in the pathway, as a 5'-oxoaverantin cyclase that mediates conversion of 5'-oxoaverantin, as well as a versicolorin B synthase in a later step in the pathway. The averufin oxidase aflI catalyzes the conversion of AVF to versiconal hemiacetal acetate (VHA). VHA is then the substrate for the versiconal hemiacetal acetate esterase aflJ to yield versiconal (VAL). Versicolorin B synthase aflK then converts VAL to versicolorin B (VERB) by closing the bisfuran ring of aflatoxin which is required for DNA-binding, thus giving to aflatoxin its activity as a mutagen. Then, the activity of the versicolorin B desaturase aflL leads to versicolorin A (VERA). A branch point starts from VERB since it can also be converted to dihydrodemethylsterigmatocystin (DMDHST), probably also by aflL, VERA being a precursor for aflatoxins B1 and G1, and DMDHST for aflatoxins B2 and G2. Next, the versicolorin reductase aflM and the cytochrome P450 monooxygenase aflN are involved in conversion of VERA to demethylsterigmatocystin (DMST). AflX and aflY seem also involved in this step, through probable aflX-mediated epoxide ring-opening step following versicolorin A oxidation and aflY-mediated Baeyer-Villiger oxidation required for the formation of the xanthone ring. The methyltransferase aflO then leads to the modification of DMST to sterigmatocystin (ST), and of DMDHST to dihydrosterigmatocystin (DHST). Both ST and DHST are then substrates of the O-methyltransferase aflP to yield O-methylsterigmatocystin (OMST) and dihydro-O-methylsterigmatocystin (DHOMST), respectively. Finally OMST is converted to aflatoxins B1 and G1, and DHOMST to aflatoxins B2 and G2, via the action of several enzymes including O-methylsterigmatocystin oxidoreductase aflQ, the cytochrome P450 monooxygenase aflU, but also the NADH-dependent flavin oxidoreductase nadA which is specifically required for the synthesis of AFG1. The protein is Oxidoreductase aflX of Aspergillus parasiticus (strain ATCC 56775 / NRRL 5862 / SRRC 143 / SU-1).